Here is a 772-residue protein sequence, read N- to C-terminus: Semaphorin-3A (772 aa).

The first 20 residues, 1–20 (MGWFTGIACLFWGILLTARA), serve as a signal peptide directing secretion. One can recognise a Sema domain in the interval 31-514 (RLKLSYKEML…STAGVAQLPL (484 aa)). Asn-53 is a glycosylation site (N-linked (GlcNAc...) asparagine). Residues Cys-103 and Cys-114 are joined by a disulfide bond. Asn-125 carries N-linked (GlcNAc...) asparagine glycosylation. 4 cysteine pairs are disulfide-bonded: Cys-132-Cys-141, Cys-269-Cys-381, Cys-293-Cys-341, and Cys-517-Cys-535. Positions 577–665 (HGHSLEERII…GFMQTLLKVT (89 aa)) constitute an Ig-like C2-type domain. N-linked (GlcNAc...) asparagine glycosylation is present at Asn-591. An intrachain disulfide couples Cys-650 to Cys-723. The span at 677–691 (LLHKDDDGDGSKTKE) shows a compositional bias: basic and acidic residues. Disordered stretches follow at residues 677 to 698 (LLHKDDDGDGSKTKEMSSSMTP) and 729 to 772 (RDRK…PRSV). Over residues 729 to 738 (RDRKQRRQRP) the composition is skewed to basic residues. The span at 750-772 (HMQESKKGRNRRTHEFERAPRSV) shows a compositional bias: basic and acidic residues.

The protein belongs to the semaphorin family. In terms of assembly, interacts with PLXND1. As to expression, expressed in the dorsal root ganglia.

It is found in the secreted. Functionally, may be involved in guiding growing axons towards their targets by forming a molecular boundary that instructs axons to engage in the formation of specific nerve tracts. Binds to neuropilin. Involved in the development of the olfactory system and in neuronal control of puberty. This Rattus norvegicus (Rat) protein is Semaphorin-3A (Sema3a).